A 207-amino-acid chain; its full sequence is Urease accessory protein UreE (207 aa).

The segment at 171–207 (HHGHAHSHSHSHDHDHDHDHDHQHGPGCAHGHGHDHH) is disordered. A compositionally biased stretch (basic and acidic residues) spans 180 to 194 (HSHDHDHDHDHDHQH).

This sequence belongs to the UreE family.

Its subcellular location is the cytoplasm. Its function is as follows. Involved in urease metallocenter assembly. Binds nickel. Probably functions as a nickel donor during metallocenter assembly. The chain is Urease accessory protein UreE from Burkholderia lata (strain ATCC 17760 / DSM 23089 / LMG 22485 / NCIMB 9086 / R18194 / 383).